Consider the following 455-residue polypeptide: 2-oxoisovalerate dehydrogenase subunit alpha, mitochondrial (455 aa).

The N-terminal 55 residues, 1–55, are a transit peptide targeting the mitochondrion; the sequence is MQGSAKMAMAVAVAVARVWRPSRGLGRTGLPLLRLLGARGLARFHPHRWQQQQHF. Residues tyrosine 168 and arginine 169 each coordinate thiamine diphosphate. Serine 216 lines the K(+) pocket. Serine 217 contacts thiamine diphosphate. Residues proline 218, threonine 221, and glutamine 222 each coordinate K(+). Residue glutamate 248 coordinates Mg(2+). Thiamine diphosphate is bound by residues glycine 249, alanine 250, and arginine 275. The Mg(2+) site is built by asparagine 277 and tyrosine 279. Histidine 346 is a binding site for thiamine diphosphate. The residue at position 347 (serine 347) is a Phosphoserine; by BCKDK. Threonine 348 bears the Phosphothreonine mark. A phosphoserine mark is found at serine 349 and serine 357. N6-acetyllysine; alternate is present on lysine 366. At lysine 366 the chain carries N6-succinyllysine; alternate. The residue at position 390 (lysine 390) is an N6-succinyllysine.

The protein belongs to the BCKDHA family. In terms of assembly, heterotetramer of 2 alpha/BCKDHA and 2 beta chains/BCKDHB that forms the branched-chain alpha-keto acid decarboxylase (E1) component of the BCKD complex. The branched-chain alpha-ketoacid dehydrogenase is a large complex composed of three major building blocks E1, E2 and E3. It is organized around E2, a 24-meric cubic core composed of DBT, to which are associated 6 to 12 copies of E1, and approximately 6 copies of the dehydrogenase E3, a DLD dimer. Interacts with PPM1K. The cofactor is thiamine diphosphate. Mg(2+) is required as a cofactor. Phosphorylated at Ser-347 by BCKDK and dephosphorylated by protein phosphatase PPM1K. Expressed in kidney (at protein level).

It localises to the mitochondrion matrix. It carries out the reaction N(6)-[(R)-lipoyl]-L-lysyl-[protein] + 3-methyl-2-oxobutanoate + H(+) = N(6)-[(R)-S(8)-2-methylpropanoyldihydrolipoyl]-L-lysyl-[protein] + CO2. Together with BCKDHB forms the heterotetrameric E1 subunit of the mitochondrial branched-chain alpha-ketoacid dehydrogenase (BCKD) complex. The BCKD complex catalyzes the multi-step oxidative decarboxylation of alpha-ketoacids derived from the branched-chain amino-acids valine, leucine and isoleucine producing CO2 and acyl-CoA which is subsequently utilized to produce energy. The E1 subunit catalyzes the first step with the decarboxylation of the alpha-ketoacid forming an enzyme-product intermediate. A reductive acylation mediated by the lipoylamide cofactor of E2 extracts the acyl group from the E1 active site for the next step of the reaction. The chain is 2-oxoisovalerate dehydrogenase subunit alpha, mitochondrial (BCKDHA) from Bos taurus (Bovine).